We begin with the raw amino-acid sequence, 310 residues long: Olfactory receptor 4C11 (310 aa).

Topologically, residues 1 to 23 are extracellular; that stretch reads MQQNNSVPEFILLGLTQDPLRQK. N-linked (GlcNAc...) asparagine glycosylation is present at asparagine 4. The helical transmembrane segment at 24–47 threads the bilayer; it reads IVFVIFLIFYMGTVVGNMLIIVTI. Residues 48–55 lie on the Cytoplasmic side of the membrane; that stretch reads KSSRTLGS. A helical transmembrane segment spans residues 56–77; it reads PMYFFLFYLSFADSCFSTSTAP. The Extracellular segment spans residues 78–98; the sequence is RLIVDALSEKKIITYNECMTQ. A disulfide bridge connects residues cysteine 95 and cysteine 187. A helical membrane pass occupies residues 99–118; sequence VFALHLFGCMEIFVLILMAV. The Cytoplasmic segment spans residues 119 to 137; sequence DRYVAICKPLRYPTIMSQQ. The helical transmembrane segment at 138-156 threads the bilayer; the sequence is VCIILIVLAWIGSLIHSTA. The Extracellular segment spans residues 157 to 193; the sequence is QIILALRLPFCGPYLIDHYCCDLQPLLKLACMDTYMI. The chain crosses the membrane as a helical span at residues 194–217; that stretch reads NLLLVSNSGAICSSSFMILIISYI. The Cytoplasmic portion of the chain corresponds to 218 to 233; sequence VILHSLRNHSAKGKKK. The helical transmembrane segment at 234 to 256 threads the bilayer; it reads ALSACTSHIIVVILFFGPCIFIY. Residues 257-267 are Extracellular-facing; that stretch reads TRPPTTFPMDK. Residues 268–287 traverse the membrane as a helical segment; sequence MVAVFYTIGTPFLNPLIYTL. Over 288 to 310 the chain is Cytoplasmic; sequence RNAEVKNAMRKLWHGKIISENKG.

Belongs to the G-protein coupled receptor 1 family.

The protein localises to the cell membrane. In terms of biological role, odorant receptor. The chain is Olfactory receptor 4C11 (OR4C11) from Homo sapiens (Human).